Reading from the N-terminus, the 85-residue chain is MARYFRRRKFCRFTAEGVKQIDYKDIIMLKNYITESGKIVPSRITGTCSKYQRQLAQAIKVARYLSLLPYTDEHVRRESCTTEVP.

This sequence belongs to the bacterial ribosomal protein bS18 family. As to quaternary structure, part of the 30S ribosomal subunit. Forms a tight heterodimer with protein bS6.

Its function is as follows. Binds as a heterodimer with protein bS6 to the central domain of the 16S rRNA, where it helps stabilize the platform of the 30S subunit. The sequence is that of Small ribosomal subunit protein bS18 from Hamiltonella defensa subsp. Acyrthosiphon pisum (strain 5AT).